The primary structure comprises 372 residues: Chaperone protein DnaJ (372 aa).

In terms of domain architecture, J spans 5 to 70 (DYYDVLGVER…QKRANYDQYG (66 aa)). A CR-type zinc finger spans residues 130 to 208 (GTTKDIQINT…CHGDGRVHKK (79 aa)). 8 residues coordinate Zn(2+): Cys-143, Cys-146, Cys-160, Cys-163, Cys-182, Cys-185, Cys-196, and Cys-199. CXXCXGXG motif repeat units lie at residues 143–150 (CDSCDGSG), 160–167 (CSTCHGAG), 182–189 (CPSCHGSG), and 196–203 (CKSCHGDG).

The protein belongs to the DnaJ family. As to quaternary structure, homodimer. Zn(2+) is required as a cofactor.

It is found in the cytoplasm. Its function is as follows. Participates actively in the response to hyperosmotic and heat shock by preventing the aggregation of stress-denatured proteins and by disaggregating proteins, also in an autonomous, DnaK-independent fashion. Unfolded proteins bind initially to DnaJ; upon interaction with the DnaJ-bound protein, DnaK hydrolyzes its bound ATP, resulting in the formation of a stable complex. GrpE releases ADP from DnaK; ATP binding to DnaK triggers the release of the substrate protein, thus completing the reaction cycle. Several rounds of ATP-dependent interactions between DnaJ, DnaK and GrpE are required for fully efficient folding. Also involved, together with DnaK and GrpE, in the DNA replication of plasmids through activation of initiation proteins. The protein is Chaperone protein DnaJ of Pasteurella multocida (strain Pm70).